Reading from the N-terminus, the 475-residue chain is Aspartyl/glutamyl-tRNA(Asn/Gln) amidotransferase subunit B (475 aa).

It belongs to the GatB/GatE family. GatB subfamily. In terms of assembly, heterotrimer of A, B and C subunits.

It carries out the reaction L-glutamyl-tRNA(Gln) + L-glutamine + ATP + H2O = L-glutaminyl-tRNA(Gln) + L-glutamate + ADP + phosphate + H(+). The enzyme catalyses L-aspartyl-tRNA(Asn) + L-glutamine + ATP + H2O = L-asparaginyl-tRNA(Asn) + L-glutamate + ADP + phosphate + 2 H(+). In terms of biological role, allows the formation of correctly charged Asn-tRNA(Asn) or Gln-tRNA(Gln) through the transamidation of misacylated Asp-tRNA(Asn) or Glu-tRNA(Gln) in organisms which lack either or both of asparaginyl-tRNA or glutaminyl-tRNA synthetases. The reaction takes place in the presence of glutamine and ATP through an activated phospho-Asp-tRNA(Asn) or phospho-Glu-tRNA(Gln). The protein is Aspartyl/glutamyl-tRNA(Asn/Gln) amidotransferase subunit B of Hydrogenovibrio crunogenus (strain DSM 25203 / XCL-2) (Thiomicrospira crunogena).